The following is a 106-amino-acid chain: Met repressor (106 aa).

It belongs to the MetJ family. As to quaternary structure, homodimer.

Its subcellular location is the cytoplasm. This regulatory protein, when combined with SAM (S-adenosylmethionine) represses the expression of the methionine regulon and of enzymes involved in SAM synthesis. The protein is Met repressor of Vibrio atlanticus (strain LGP32) (Vibrio splendidus (strain Mel32)).